We begin with the raw amino-acid sequence, 1105 residues long: AP-3 complex subunit beta-1 (1105 aa).

2 disordered regions span residues 1–26 (MSSNSFAYNEQSGGGEAAELGQEATS) and 271–292 (KNFYESEEEEEEKEKSSRKKSY). A phosphoserine mark is found at Ser-276 and Ser-610. The tract at residues 668 to 824 (KKEKPMKKFY…KPQQERHPPS (157 aa)) is disordered. Positions 679–704 (ESEEEEDEDEDEDEEEEEKEDEDENP) are enriched in acidic residues. 2 stretches are compositionally biased toward low complexity: residues 705-722 (SDSSSDSESGSGSESGDT) and 730-741 (DSSSGQDSETGS). A compositionally biased stretch (basic residues) spans 750-759 (VAKRNSKTKR). Basic and acidic residues predominate over residues 760 to 774 (KSDSENREKKNENSK). 2 positions are modified to phosphoserine: Ser-761 and Ser-763. Low complexity predominate over residues 775 to 788 (ASESSSEESSSMED). Acidic residues predominate over residues 789-799 (SSSESESESGS). Over residues 811–824 (AKERKPQQERHPPS) the composition is skewed to basic and acidic residues.

This sequence belongs to the adaptor complexes large subunit family. Adaptor protein complex 3 (AP-3) is a heterotetramer composed of two large adaptins (delta-type subunit AP3D1 and beta-type subunit AP3B1 or AP3B2), a medium adaptin (mu-type subunit AP3M1 or AP3M2) and a small adaptin (sigma-type subunit APS1 or AP3S2). AP-3 associates with the BLOC-1 complex. Interacts with KIF3A; interaction is direct; interaction is impaired by pyrophosphorylation of AP3B1. In terms of processing, phosphorylated on serine residues. Post-translationally, pyrophosphorylated by 5-diphosphoinositol pentakisphosphate (5-IP7). Pyrophosphorylation impairs interaction with KIF3A. Serine pyrophosphorylation is achieved by Mg(2+)-dependent, but enzyme independent transfer of a beta-phosphate from a inositol pyrophosphate to a pre-phosphorylated serine residue. As to expression, ubiquitously expressed.

It localises to the cytoplasmic vesicle. Its subcellular location is the clathrin-coated vesicle membrane. It is found in the golgi apparatus. Subunit of non-clathrin- and clathrin-associated adaptor protein complex 3 (AP-3) that plays a role in protein sorting in the late-Golgi/trans-Golgi network (TGN) and/or endosomes. The AP complexes mediate both the recruitment of clathrin to membranes and the recognition of sorting signals within the cytosolic tails of transmembrane cargo molecules. AP-3 appears to be involved in the sorting of a subset of transmembrane proteins targeted to lysosomes and lysosome-related organelles. In concert with the BLOC-1 complex, AP-3 is required to target cargos into vesicles assembled at cell bodies for delivery into neurites and nerve terminals. This Mus musculus (Mouse) protein is AP-3 complex subunit beta-1 (Ap3b1).